The sequence spans 429 residues: Serine hydroxymethyltransferase (429 aa).

(6S)-5,6,7,8-tetrahydrofolate is bound by residues Leu-126 and 130–132; that span reads GHL. Lys-235 is subject to N6-(pyridoxal phosphate)lysine. 359–361 contacts (6S)-5,6,7,8-tetrahydrofolate; it reads SPF.

This sequence belongs to the SHMT family. As to quaternary structure, homodimer. Pyridoxal 5'-phosphate is required as a cofactor.

The protein localises to the cytoplasm. The enzyme catalyses (6R)-5,10-methylene-5,6,7,8-tetrahydrofolate + glycine + H2O = (6S)-5,6,7,8-tetrahydrofolate + L-serine. The protein operates within one-carbon metabolism; tetrahydrofolate interconversion. It functions in the pathway amino-acid biosynthesis; glycine biosynthesis; glycine from L-serine: step 1/1. Catalyzes the reversible interconversion of serine and glycine with tetrahydrofolate (THF) serving as the one-carbon carrier. This reaction serves as the major source of one-carbon groups required for the biosynthesis of purines, thymidylate, methionine, and other important biomolecules. Also exhibits THF-independent aldolase activity toward beta-hydroxyamino acids, producing glycine and aldehydes, via a retro-aldol mechanism. The chain is Serine hydroxymethyltransferase from Synechococcus sp. (strain WH7803).